The sequence spans 379 residues: Chaperone protein DnaJ (379 aa).

Residues 5–70 form the J domain; it reads DYYETLGCDR…QKRAAYDRFG (66 aa). The segment at 134–212 adopts a CR-type zinc-finger fold; sequence GKTAQIKIPT…CGGAGRVTRE (79 aa). Residues Cys-147, Cys-150, Cys-164, Cys-167, Cys-186, Cys-189, Cys-200, and Cys-203 each contribute to the Zn(2+) site. CXXCXGXG motif repeat units follow at residues 147-154, 164-171, 186-193, and 200-207; these read CETCSGTG, CRMCGGAG, CPNCQGRG, and CSDCGGAG.

This sequence belongs to the DnaJ family. As to quaternary structure, homodimer. It depends on Zn(2+) as a cofactor.

It is found in the cytoplasm. In terms of biological role, participates actively in the response to hyperosmotic and heat shock by preventing the aggregation of stress-denatured proteins and by disaggregating proteins, also in an autonomous, DnaK-independent fashion. Unfolded proteins bind initially to DnaJ; upon interaction with the DnaJ-bound protein, DnaK hydrolyzes its bound ATP, resulting in the formation of a stable complex. GrpE releases ADP from DnaK; ATP binding to DnaK triggers the release of the substrate protein, thus completing the reaction cycle. Several rounds of ATP-dependent interactions between DnaJ, DnaK and GrpE are required for fully efficient folding. Also involved, together with DnaK and GrpE, in the DNA replication of plasmids through activation of initiation proteins. The protein is Chaperone protein DnaJ of Xanthobacter autotrophicus (strain ATCC BAA-1158 / Py2).